The sequence spans 97 residues: Small ribosomal subunit protein uS19 (97 aa).

The segment at 74-97 (FSPTRRFGGHPDKKAVKGKIEKQG) is disordered. The segment covering 82-97 (GHPDKKAVKGKIEKQG) has biased composition (basic and acidic residues).

This sequence belongs to the universal ribosomal protein uS19 family.

Its function is as follows. Protein S19 forms a complex with S13 that binds strongly to the 16S ribosomal RNA. This chain is Small ribosomal subunit protein uS19, found in Petrotoga mobilis (strain DSM 10674 / SJ95).